A 479-amino-acid chain; its full sequence is Endosomal/lysosomal proton channel TMEM175 (479 aa).

The segment at 1–26 (MSGPQAPEPTLEGQADASAGSPDEDA) is disordered. At 1-33 (MSGPQAPEPTLEGQADASAGSPDEDAAEGIQHS) the chain is on the cytoplasmic side. The helical transmembrane segment at 34–56 (HRMLSFSDALLSIIATVMEFDKS) threads the bilayer. The RxxxFSD motif 1 motif lies at 35 to 41 (RMLSFSD). The interval 52-58 (EFDKSVQ) is short helix H2-1. Topologically, residues 57–64 (VQRLLATR) are lumenal. A helical membrane pass occupies residues 65–87 (IAVYLMTFLIVTVAWAAHTRLFQ). Over 88 to 93 (VVGKID) the chain is Cytoplasmic. The helical transmembrane segment at 94 to 103 (DTLALLNLFS) threads the bilayer. At 104–113 (LMVTFPEVPL) the chain is on the lumenal side. Residues 114 to 135 (GIFLFCMCVIAIGAVQALIVLY) traverse the membrane as a helical segment. At 136–159 (AFHFPHLLSPQIERSAHRGLYRQR) the chain is on the cytoplasmic side. A helical membrane pass occupies residues 160–180 (VLGIIVRGPALCLAAAGFSLF). The Lumenal portion of the chain corresponds to 181–185 (FYPAS). The helical transmembrane segment at 186-205 (YLLMAMVIVLPHVSKAAGWC) threads the bilayer. Residues 206–232 (RAQLVGPREPPAHSVEVFTFDLHEPLS) lie on the Cytoplasmic side of the membrane. The helical transmembrane segment at 233 to 257 (KERVEAFSDGVYAIVATLLILDICE) threads the bilayer. Positions 235-241 (RVEAFSD) match the RxxxFSD motif 2 motif. The Lumenal portion of the chain corresponds to 258-284 (DNVPDAKDVKEKFQGSLVAALGESGPH). The short helix H1-2 stretch occupies residues 263 to 271 (AKDVKEKFQ). The tract at residues 273–279 (SLVAALG) is short helix H2-2. The helical transmembrane segment at 285-307 (FLAYFGSFATVGLLWFAHHSLFL) threads the bilayer. At 308 to 313 (HIRRAT) the chain is on the cytoplasmic side. Residues 314 to 335 (QPMGLLNTLSLAFVGGLPLAYQ) traverse the membrane as a helical segment. Residues 336 to 350 (QTSAFTKQPRDELES) lie on the Lumenal side of the membrane. Residues 351–371 (VRISCAIIFLASIFQFAIWTT) traverse the membrane as a helical segment. Residues 372–391 (ALLQEGETLQPSARFGGREH) lie on the Cytoplasmic side of the membrane. A helical membrane pass occupies residues 392–415 (AFMFAKLALYPCASLLAFACTCVL). At 416 to 417 (SS) the chain is on the lumenal side. A helical transmembrane segment spans residues 418-444 (FSTAIFHAMQIAVPFAFLLLRLLVRLA). Residues 445 to 479 (LAGLRALRGLVGPVLARPAPGAADEAQSPLLPAPC) lie on the Cytoplasmic side of the membrane.

Belongs to the TMEM175 family. Homodimer. Interacts with AKT (AKT1, AKT2 or AKT3); leading to formation of the lysoK(GF) complex, which activates the channel. Interacts with LAMP1; inhibiting the proton channel activity of TMEM175. Interacts with LAMP2; inhibiting the proton channel activity of TMEM175.

It localises to the endosome membrane. Its subcellular location is the lysosome membrane. The enzyme catalyses H(+)(in) = H(+)(out). The catalysed reaction is K(+)(in) = K(+)(out). With respect to regulation, active at low pH (under pH 4.6): proton channel activity is activated by luminal side protons. Polyunsaturated fatty acids, such as arachidonic acid, also activate the channel activity. Proton channel activity is directly inhibited by LAMP1 or LAMP2, facilitating lysosomal acidification. Channel activity is activated following interaction with AKT (AKT1, AKT2 or AKT3): interaction promotes activation from closed to an open state. Activation by AKT is independent of AKT serine/threonine-protein kinase activity. Its function is as follows. Proton-activated proton channel that catalyzes proton efflux from endosomes and lysosomes to maintain a steady-state pH. Activated at low pH (under pH 4.6) by luminal side protons: selectively mediates lysosomal proton release from lysosomes, eliciting a proton leak that balances V-ATPase activity to maintain pH homeostasis. Regulation of lumenal pH stability is required for autophagosome-lysosome fusion. Also acts as a potassium channel at higher pH, regulating potassium conductance in endosomes and lysosomes. Constitutes the pore-forming subunit of the lysoK(GF) complex, a complex activated by extracellular growth factors. The lysoK(GF) complex is composed of TMEM175 and AKT (AKT1, AKT2 or AKT3), a major target of growth factor receptors: in the complex, TMEM175 channel is opened by conformational changes by AKT, leading to its activation. The lysoK(GF) complex is required to protect neurons against stress-induced damage. The chain is Endosomal/lysosomal proton channel TMEM175 from Bos taurus (Bovine).